We begin with the raw amino-acid sequence, 66 residues long: Phylloseptin-H5 (66 aa).

The N-terminal stretch at 1–22 (MAFLKKSLFLVLFLGLVSLSIC) is a signal peptide. The propeptide occupies 23-44 (EEEKRETEEEENEQEDDDKSEE). The disordered stretch occupies residues 24–44 (EEKRETEEEENEQEDDDKSEE). A compositionally biased stretch (acidic residues) spans 30–41 (EEEENEQEDDDK). A Phenylalanine amide modification is found at F65.

As to expression, expressed by the skin glands.

It localises to the secreted. In terms of biological role, has antibacterial activity against the Gram-negative bacteria E.coli and P.aeruginosa, and the Gram-positive bacterium S.aureus. No hemolytic activity. This chain is Phylloseptin-H5 (psn7), found in Pithecopus hypochondrialis (Orange-legged leaf frog).